Here is a 167-residue protein sequence, read N- to C-terminus: Peptide deformylase (167 aa).

Fe cation contacts are provided by C91 and H133. Residue E134 is part of the active site. Residue H137 participates in Fe cation binding.

Belongs to the polypeptide deformylase family. Fe(2+) serves as cofactor.

It catalyses the reaction N-terminal N-formyl-L-methionyl-[peptide] + H2O = N-terminal L-methionyl-[peptide] + formate. In terms of biological role, removes the formyl group from the N-terminal Met of newly synthesized proteins. Requires at least a dipeptide for an efficient rate of reaction. N-terminal L-methionine is a prerequisite for activity but the enzyme has broad specificity at other positions. In Tolumonas auensis (strain DSM 9187 / NBRC 110442 / TA 4), this protein is Peptide deformylase.